Here is a 331-residue protein sequence, read N- to C-terminus: UPF0194 membrane protein Ent638_1286 (331 aa).

The N-terminal stretch at 1 to 16 (MKKPVVVILAVVVLLA) is a signal peptide. Residues 107-208 (EEVAQAEAAV…LDLHDTTLIA (102 aa)) are a coiled coil.

It belongs to the UPF0194 family.

The protein resides in the periplasm. The protein is UPF0194 membrane protein Ent638_1286 of Enterobacter sp. (strain 638).